The chain runs to 260 residues: Ava biosynthesis cluster protein M (260 aa).

The N-terminal stretch at 1-15 (MKVLVLGLCRTGTSS) is a signal peptide.

This sequence belongs to the cytochrome P450 family.

It participates in secondary metabolite biosynthesis. In terms of biological role, part of the cluster that mediates the biosynthesis of a highly modified cyclo-arginine-tryptophan dipeptide (cRW). The first step of the pathway is perfornmed by the arginine-containing cyclodipeptide synthase (RCPDS) avaA that acts as the scaffold-generating enzyme and is responsible for formation of the cyclo-Arg-Trp (cRW) diketopiperazine. AvaB then acts as a multifunctional flavoenzyme that is responsible for generating the cyclo-Arg-formylkynurenine DKP, which can be deformylated by avaC. AvaB then further catalyzes an additional N-oxidation followed by cyclization and dehydration. The next step is an N-acetylation of the guanidine group catalyzed by the arginine N-acetyltransferase avaD. The roles of the additional enzymes identified within the ava cluster still have to be determined. The protein is Ava biosynthesis cluster protein M of Aspergillus versicolor.